A 256-amino-acid polypeptide reads, in one-letter code: Non-specific lipid transfer protein GPI-anchored 23 (256 aa).

The N-terminal stretch at 1 to 21 is a signal peptide; it reads MKPSFVLLSIVLLLSSSLSDA. Asn-41 is a glycosylation site (N-linked (GlcNAc...) asparagine). Disulfide bonds link Cys-45/Cys-88, Cys-55/Cys-72, Cys-73/Cys-113, and Cys-86/Cys-121. The disordered stretch occupies residues 125 to 230; it reads TPAASTPVSP…SPSPSPSPSI (106 aa). Over residues 138 to 230 the composition is skewed to low complexity; it reads SPTTSPSSAK…SPSPSPSPSI (93 aa). Ser-225 carries GPI-anchor amidated serine lipidation. Residues 226–256 constitute a propeptide, removed in mature form; sequence PSPSISSSGILLVSKLFIAVVMVSSFLYILA.

It belongs to the plant LTP family. Confined to the anthers of the inflorescence.

It is found in the cell membrane. Its function is as follows. Probable lipid transfer protein. The chain is Non-specific lipid transfer protein GPI-anchored 23 from Arabidopsis thaliana (Mouse-ear cress).